The following is a 563-amino-acid chain: Arginine--tRNA ligase (563 aa).

Residues 121-131 carry the 'HIGH' region motif; that stretch reads PNIAKPFSIGH.

The protein belongs to the class-I aminoacyl-tRNA synthetase family. In terms of assembly, monomer.

The protein resides in the cytoplasm. The enzyme catalyses tRNA(Arg) + L-arginine + ATP = L-arginyl-tRNA(Arg) + AMP + diphosphate. This is Arginine--tRNA ligase from Streptococcus pyogenes serotype M4 (strain MGAS10750).